Reading from the N-terminus, the 180-residue chain is Large ribosomal subunit protein uL6 (180 aa).

It belongs to the universal ribosomal protein uL6 family. As to quaternary structure, part of the 50S ribosomal subunit.

Functionally, this protein binds to the 23S rRNA, and is important in its secondary structure. It is located near the subunit interface in the base of the L7/L12 stalk, and near the tRNA binding site of the peptidyltransferase center. The sequence is that of Large ribosomal subunit protein uL6 from Borreliella burgdorferi (strain ATCC 35210 / DSM 4680 / CIP 102532 / B31) (Borrelia burgdorferi).